We begin with the raw amino-acid sequence, 199 residues long: UPF0301 protein Ajs_3573 (199 aa).

Belongs to the UPF0301 (AlgH) family.

This is UPF0301 protein Ajs_3573 from Acidovorax sp. (strain JS42).